Reading from the N-terminus, the 238-residue chain is GATA transcription factor 7 (238 aa).

Positions 24 to 64 (TSLESSSSQRKEDEQEREKFKSFSDQSTRLSPPEDLLSFPG) are disordered. The segment covering 32 to 45 (QRKEDEQEREKFKS) has biased composition (basic and acidic residues). Residues 112-119 (KPRSKRRR) carry the Nuclear localization signal motif. The segment at 160–214 (QQLRRCCSHCGVQKTPQWRMGPLGAKTLCNACGVRFKSGRLLPEYRPACSPTFTN) adopts a GATA-type zinc-finger fold.

It belongs to the type IV zinc-finger family. Class A subfamily.

The protein resides in the nucleus. Transcriptional activator that specifically binds 5'-GATA-3' or 5'-GAT-3' motifs within gene promoters. May be involved in the regulation of some light-responsive genes. This is GATA transcription factor 7 (GATA7) from Arabidopsis thaliana (Mouse-ear cress).